The chain runs to 471 residues: Methylenetetrahydrofolate--tRNA-(uracil-5-)-methyltransferase TrmFO (471 aa).

Residue 9–14 participates in FAD binding; sequence GGGLSG.

This sequence belongs to the MnmG family. TrmFO subfamily. It depends on FAD as a cofactor.

The protein localises to the cytoplasm. It carries out the reaction uridine(54) in tRNA + (6R)-5,10-methylene-5,6,7,8-tetrahydrofolate + NADH + H(+) = 5-methyluridine(54) in tRNA + (6S)-5,6,7,8-tetrahydrofolate + NAD(+). The enzyme catalyses uridine(54) in tRNA + (6R)-5,10-methylene-5,6,7,8-tetrahydrofolate + NADPH + H(+) = 5-methyluridine(54) in tRNA + (6S)-5,6,7,8-tetrahydrofolate + NADP(+). In terms of biological role, catalyzes the folate-dependent formation of 5-methyl-uridine at position 54 (M-5-U54) in all tRNAs. This chain is Methylenetetrahydrofolate--tRNA-(uracil-5-)-methyltransferase TrmFO, found in Beijerinckia indica subsp. indica (strain ATCC 9039 / DSM 1715 / NCIMB 8712).